Reading from the N-terminus, the 1454-residue chain is Alpha-2-macroglobulin-like protein 1 (1454 aa).

A signal peptide spans 1–17 (MWAQLLLGMLALSPAIA). A disulfide bond links Cys-40 and Cys-78. A glycan (N-linked (GlcNAc...) asparagine) is linked at Asn-120. 2 disulfides stabilise this stretch: Cys-241–Cys-291 and Cys-259–Cys-279. Asn-281 and Asn-409 each carry an N-linked (GlcNAc...) asparagine glycan. Disulfide bonds link Cys-464–Cys-557, Cys-589–Cys-769, Cys-819–Cys-847, Cys-845–Cys-881, Cys-919–Cys-1307, Cys-1075–Cys-1123, and Cys-1338–Cys-1453. Residues 695 to 726 (SHRSPEYSTAMGAGGGHPEAFESSTPLHQAED) form a bait region region. Residue Asn-857 is glycosylated (N-linked (GlcNAc...) asparagine). Positions 970–973 (CGEQ) form a cross-link, isoglutamyl cysteine thioester (Cys-Gln). Asn-1020 carries N-linked (GlcNAc...) asparagine glycosylation.

The protein belongs to the protease inhibitor I39 (alpha-2-macroglobulin) family. As to quaternary structure, monomer. In the epidermis, expressed predominantly in the granular layer at the apical edge of keratinocytes (at protein level). Also detected in placenta, testis and thymus but not in epithelia of kidney, lung, small intestine or colon.

It is found in the secreted. Its function is as follows. Is able to inhibit all four classes of proteinases by a unique 'trapping' mechanism. This protein has a peptide stretch, called the 'bait region' which contains specific cleavage sites for different proteinases. When a proteinase cleaves the bait region, a conformational change is induced in the protein which traps the proteinase. The entrapped enzyme remains active against low molecular weight substrates (activity against high molecular weight substrates is greatly reduced). Following cleavage in the bait region a thioester bond is hydrolyzed and mediates the covalent binding of the protein to the proteinase. Displays inhibitory activity against chymotrypsin, papain, thermolysin, subtilisin A and, to a lesser extent, elastase but not trypsin. May play an important role during desquamation by inhibiting extracellular proteases. The sequence is that of Alpha-2-macroglobulin-like protein 1 from Homo sapiens (Human).